The primary structure comprises 618 residues: 1-deoxy-D-xylulose-5-phosphate synthase (618 aa).

Residues H70 and 111–113 each bind thiamine diphosphate; that span reads GHS. Position 142 (D142) interacts with Mg(2+). Thiamine diphosphate is bound by residues 143 to 144, N171, Y278, and E360; that span reads GS. N171 contributes to the Mg(2+) binding site.

The protein belongs to the transketolase family. DXPS subfamily. In terms of assembly, homodimer. Requires Mg(2+) as cofactor. It depends on thiamine diphosphate as a cofactor.

The enzyme catalyses D-glyceraldehyde 3-phosphate + pyruvate + H(+) = 1-deoxy-D-xylulose 5-phosphate + CO2. The protein operates within metabolic intermediate biosynthesis; 1-deoxy-D-xylulose 5-phosphate biosynthesis; 1-deoxy-D-xylulose 5-phosphate from D-glyceraldehyde 3-phosphate and pyruvate: step 1/1. Catalyzes the acyloin condensation reaction between C atoms 2 and 3 of pyruvate and glyceraldehyde 3-phosphate to yield 1-deoxy-D-xylulose-5-phosphate (DXP). This chain is 1-deoxy-D-xylulose-5-phosphate synthase, found in Helicobacter pylori (strain J99 / ATCC 700824) (Campylobacter pylori J99).